A 505-amino-acid chain; its full sequence is Maturase K (505 aa).

Belongs to the intron maturase 2 family. MatK subfamily.

It is found in the plastid. Its subcellular location is the chloroplast. Its function is as follows. Usually encoded in the trnK tRNA gene intron. Probably assists in splicing its own and other chloroplast group II introns. This is Maturase K from Nuphar advena (Common spatterdock).